We begin with the raw amino-acid sequence, 1406 residues long: Ubiquitin carboxyl-terminal hydrolase 6 (1406 aa).

The Rab-GAP TBC domain maps to 100-292 (GIPMNIRGPV…RLWDVYLVEG (193 aa)). The interval 348 to 380 (KLTRKQGDLPPPAKREQGSLAPRPVPASRGGKT) is disordered. In terms of domain architecture, USP spans 532 to 1369 (TGLSNLGNTC…SAYILFYEQQ (838 aa)). Cysteine 541 acts as the Nucleophile in catalysis. A disordered region spans residues 1120-1231 (HKPLTPQGDE…KKNLDASKEN (112 aa)). The span at 1129–1155 (ELSKPRILAREVKKVDAQSSAGKEDML) shows a compositional bias: basic and acidic residues. Positions 1156 to 1197 (LSKSPSSLSANISSSPKGSPSSSRKSGTSCPSSKNSSPNSSP) are enriched in low complexity. The Proton acceptor role is filled by histidine 1328. The segment at 1384 to 1406 (KMADTSSTDEDSESDYEKYSMLQ) is disordered.

The protein belongs to the peptidase C19 family. Interacts with RAC1 and CDC42. Interacts (via Rab-GAP TBC domain) with ARF6. Interacts with calmodulin (CALM1, CALM2 and/or CALM3); the interaction is calcium-dependent. In terms of processing, monubiquitinated; ubiquitination is calmodulin and calcium dependent. Testis specific. Expressed in various cancer cell lines.

It is found in the cell membrane. It localises to the cytoplasm. The protein localises to the endosome. The enzyme catalyses Thiol-dependent hydrolysis of ester, thioester, amide, peptide and isopeptide bonds formed by the C-terminal Gly of ubiquitin (a 76-residue protein attached to proteins as an intracellular targeting signal).. In terms of biological role, deubiquitinase with an ATP-independent isopeptidase activity, cleaving at the C-terminus of the ubiquitin moiety. Catalyzes its own deubiquitination. In vitro, isoform 2, but not isoform 3, shows deubiquitinating activity. Promotes plasma membrane localization of ARF6 and selectively regulates ARF6-dependent endocytic protein trafficking. Is able to initiate tumorigenesis by inducing the production of matrix metalloproteinases following NF-kappa-B activation. May act as a GTPase-activating protein for RAB3A. This chain is Ubiquitin carboxyl-terminal hydrolase 6 (USP6), found in Homo sapiens (Human).